Here is a 450-residue protein sequence, read N- to C-terminus: Glucose-6-phosphate isomerase (450 aa).

Residue E291 is the Proton donor of the active site. Residues H312 and K426 contribute to the active site.

Belongs to the GPI family.

It localises to the cytoplasm. The enzyme catalyses alpha-D-glucose 6-phosphate = beta-D-fructose 6-phosphate. The protein operates within carbohydrate biosynthesis; gluconeogenesis. It functions in the pathway carbohydrate degradation; glycolysis; D-glyceraldehyde 3-phosphate and glycerone phosphate from D-glucose: step 2/4. Catalyzes the reversible isomerization of glucose-6-phosphate to fructose-6-phosphate. The chain is Glucose-6-phosphate isomerase from Clostridium novyi (strain NT).